Reading from the N-terminus, the 229-residue chain is Potassium/proton antiporter CemA (229 aa).

Helical transmembrane passes span 6 to 26 (AFIP…ISLC), 107 to 127 (ILHF…SFWA), and 189 to 209 (ILSG…KYWI).

Belongs to the CemA family.

The protein resides in the plastid. Its subcellular location is the chloroplast inner membrane. The catalysed reaction is K(+)(in) + H(+)(out) = K(+)(out) + H(+)(in). Functionally, contributes to K(+)/H(+) antiport activity by supporting proton efflux to control proton extrusion and homeostasis in chloroplasts in a light-dependent manner to modulate photosynthesis. Prevents excessive induction of non-photochemical quenching (NPQ) under continuous-light conditions. Indirectly promotes efficient inorganic carbon uptake into chloroplasts. This chain is Potassium/proton antiporter CemA, found in Crucihimalaya wallichii (Rock-cress).